A 347-amino-acid polypeptide reads, in one-letter code: Selenide, water dikinase (347 aa).

Cys-17 is an active-site residue. ATP contacts are provided by residues Lys-20 and 48–50 (TRD). Asp-51 contributes to the Mg(2+) binding site. ATP is bound by residues Asp-68, Asp-91, and 139–141 (GHS). Position 91 (Asp-91) interacts with Mg(2+). Asp-227 lines the Mg(2+) pocket.

This sequence belongs to the selenophosphate synthase 1 family. Class I subfamily. In terms of assembly, homodimer. Mg(2+) is required as a cofactor.

The enzyme catalyses hydrogenselenide + ATP + H2O = selenophosphate + AMP + phosphate + 2 H(+). Synthesizes selenophosphate from selenide and ATP. The chain is Selenide, water dikinase from Shigella flexneri serotype 5b (strain 8401).